Here is an 885-residue protein sequence, read N- to C-terminus: DDT domain-containing protein DDB_G0282237 (885 aa).

The WAC domain occupies 20–125; that stretch reads EEYFVIKFTK…GEIVSFKKAN (106 aa). Disordered regions lie at residues 141–184, 201–264, and 367–431; these read ESDE…INAL, DDEN…SVRK, and LEDT…KENE. A compositionally biased stretch (low complexity) spans 154 to 180; sequence SSSSSSTTTTTTTPTTPPTTTTTTSSS. Over residues 210–264 the composition is skewed to basic and acidic residues; sequence KNNGDTSSDKKGEKEKEKEKEKEKEKEKEKEKEKEKEKEKEKEKEKDSDTKSVRK. Positions 217–260 form a coiled coil; sequence SDKKGEKEKEKEKEKEKEKEKEKEKEKEKEKEKEKEKEKDSDTK. A compositionally biased stretch (acidic residues) spans 367–379; that stretch reads LEDTEEESVDIES. Residues 380–396 show a composition bias toward low complexity; it reads NDNSNSNGNSNSNNNLD. Positions 443-503 constitute a DDT domain; that stretch reads SNTFGDFLMV…MKTIFTLPSY (61 aa). A coiled-coil region spans residues 530 to 565; it reads FQNEVKRIAIEEKEKQEKLKQLEEQNIRMLNLANEL. Disordered stretches follow at residues 562–632 and 707–744; these read ANEL…WKEE and KQDD…QKKP. Acidic residues predominate over residues 567–577; the sequence is GSDDEDDEMKL. Residues 578 to 603 show a composition bias toward basic and acidic residues; the sequence is DEDGNEIKKDVEMKDNDGTKDTKKDD. 2 coiled-coil regions span residues 593–628 and 674–782; these read NDGT…GEEE and ASEK…RDRN. 2 stretches are compositionally biased toward acidic residues: residues 604–631 and 715–729; these read EENE…EWKE and AEDD…EEQQ.

It is found in the nucleus. The chain is DDT domain-containing protein DDB_G0282237 from Dictyostelium discoideum (Social amoeba).